The primary structure comprises 116 residues: Ribonuclease P protein component (116 aa).

The protein belongs to the RnpA family. As to quaternary structure, consists of a catalytic RNA component (M1 or rnpB) and a protein subunit.

It carries out the reaction Endonucleolytic cleavage of RNA, removing 5'-extranucleotides from tRNA precursor.. In terms of biological role, RNaseP catalyzes the removal of the 5'-leader sequence from pre-tRNA to produce the mature 5'-terminus. It can also cleave other RNA substrates such as 4.5S RNA. The protein component plays an auxiliary but essential role in vivo by binding to the 5'-leader sequence and broadening the substrate specificity of the ribozyme. This chain is Ribonuclease P protein component, found in Thermoanaerobacter pseudethanolicus (strain ATCC 33223 / 39E) (Clostridium thermohydrosulfuricum).